The sequence spans 302 residues: tRNA pseudouridine synthase B (302 aa).

Asp-38 serves as the catalytic Nucleophile.

This sequence belongs to the pseudouridine synthase TruB family. Type 1 subfamily.

The catalysed reaction is uridine(55) in tRNA = pseudouridine(55) in tRNA. Its function is as follows. Responsible for synthesis of pseudouridine from uracil-55 in the psi GC loop of transfer RNAs. The protein is tRNA pseudouridine synthase B of Geobacillus thermodenitrificans (strain NG80-2).